A 447-amino-acid polypeptide reads, in one-letter code: N-succinylarginine dihydrolase (447 aa).

Substrate is bound by residues 19–28 (AGLSFGNEAS), N110, and 137–138 (HR). E174 is an active-site residue. Residue R212 coordinates substrate. H248 is a catalytic residue. Residues D250 and N359 each contribute to the substrate site. C365 functions as the Nucleophile in the catalytic mechanism.

Belongs to the succinylarginine dihydrolase family. Homodimer.

The catalysed reaction is N(2)-succinyl-L-arginine + 2 H2O + 2 H(+) = N(2)-succinyl-L-ornithine + 2 NH4(+) + CO2. It participates in amino-acid degradation; L-arginine degradation via AST pathway; L-glutamate and succinate from L-arginine: step 2/5. Functionally, catalyzes the hydrolysis of N(2)-succinylarginine into N(2)-succinylornithine, ammonia and CO(2). The sequence is that of N-succinylarginine dihydrolase from Escherichia coli (strain SMS-3-5 / SECEC).